Reading from the N-terminus, the 95-residue chain is Opiscorpine-4 (95 aa).

The signal sequence occupies residues 1-19; that stretch reads MNNKLTALIFLGLLAIASC. One can recognise a BetaSPN-type CS-alpha/beta domain in the interval 55-95; that stretch reads EFMCVANIDMTKSCDTHCQKASGEKGYCHGTKCKCGVPLSY. 3 disulfides stabilise this stretch: C58-C82, C68-C87, and C72-C89.

The protein belongs to the long chain scorpion toxin family. Class 3 subfamily. Expressed by the venom gland.

The protein resides in the secreted. Functionally, has antimicrobial activity against yeasts and bacteria. The sequence is that of Opiscorpine-4 from Opistophthalmus carinatus (African yellow leg scorpion).